The primary structure comprises 424 residues: Histidine--tRNA ligase (424 aa).

It belongs to the class-II aminoacyl-tRNA synthetase family. As to quaternary structure, homodimer.

The protein localises to the cytoplasm. The enzyme catalyses tRNA(His) + L-histidine + ATP = L-histidyl-tRNA(His) + AMP + diphosphate + H(+). This Salmonella gallinarum (strain 287/91 / NCTC 13346) protein is Histidine--tRNA ligase.